The sequence spans 508 residues: Photosystem II CP47 reaction center protein (508 aa).

6 consecutive transmembrane segments (helical) span residues 21-36 (SVHI…WAGS), 101-115 (IMFS…IWHW), 140-156 (GIHL…FGAF), 203-218 (IAAG…FHLS), 237-252 (VLSS…AFVV), and 457-472 (SFAL…HGAR).

The protein belongs to the PsbB/PsbC family. PsbB subfamily. In terms of assembly, PSII is composed of 1 copy each of membrane proteins PsbA, PsbB, PsbC, PsbD, PsbE, PsbF, PsbH, PsbI, PsbJ, PsbK, PsbL, PsbM, PsbT, PsbX, PsbY, PsbZ, Psb30/Ycf12, at least 3 peripheral proteins of the oxygen-evolving complex and a large number of cofactors. It forms dimeric complexes. The cofactor is Binds multiple chlorophylls. PSII binds additional chlorophylls, carotenoids and specific lipids..

The protein localises to the plastid. It localises to the chloroplast thylakoid membrane. Its function is as follows. One of the components of the core complex of photosystem II (PSII). It binds chlorophyll and helps catalyze the primary light-induced photochemical processes of PSII. PSII is a light-driven water:plastoquinone oxidoreductase, using light energy to abstract electrons from H(2)O, generating O(2) and a proton gradient subsequently used for ATP formation. In Ceratophyllum demersum (Rigid hornwort), this protein is Photosystem II CP47 reaction center protein.